Consider the following 454-residue polypeptide: Bifunctional protein GlmU (454 aa).

Residues 1 to 225 are pyrophosphorylase; it reads MNIVILAAGM…LWETLGVNSK (225 aa). Residues 6–9, Lys-20, Gln-71, 76–77, 98–100, Gly-135, Glu-150, Asn-165, and Asn-223 contribute to the UDP-N-acetyl-alpha-D-glucosamine site; these read LAAG, GT, and YGD. A Mg(2+)-binding site is contributed by Asp-100. Mg(2+) is bound at residue Asn-223. The segment at 226–246 is linker; it reads VQLAEIERIHQRNIAQRLLEA. An N-acetyltransferase region spans residues 247-454; sequence GVTLLDPARI…WQRPVKQPKK (208 aa). UDP-N-acetyl-alpha-D-glucosamine contacts are provided by Arg-329 and Lys-347. The Proton acceptor role is filled by His-359. UDP-N-acetyl-alpha-D-glucosamine is bound by residues Tyr-362 and Asn-373. Acetyl-CoA contacts are provided by residues Ala-376, 382 to 383, Ser-401, Ala-419, and Arg-436; that span reads NY.

The protein in the N-terminal section; belongs to the N-acetylglucosamine-1-phosphate uridyltransferase family. It in the C-terminal section; belongs to the transferase hexapeptide repeat family. As to quaternary structure, homotrimer. Requires Mg(2+) as cofactor.

The protein localises to the cytoplasm. The enzyme catalyses alpha-D-glucosamine 1-phosphate + acetyl-CoA = N-acetyl-alpha-D-glucosamine 1-phosphate + CoA + H(+). The catalysed reaction is N-acetyl-alpha-D-glucosamine 1-phosphate + UTP + H(+) = UDP-N-acetyl-alpha-D-glucosamine + diphosphate. It functions in the pathway nucleotide-sugar biosynthesis; UDP-N-acetyl-alpha-D-glucosamine biosynthesis; N-acetyl-alpha-D-glucosamine 1-phosphate from alpha-D-glucosamine 6-phosphate (route II): step 2/2. Its pathway is nucleotide-sugar biosynthesis; UDP-N-acetyl-alpha-D-glucosamine biosynthesis; UDP-N-acetyl-alpha-D-glucosamine from N-acetyl-alpha-D-glucosamine 1-phosphate: step 1/1. It participates in bacterial outer membrane biogenesis; LPS lipid A biosynthesis. Its function is as follows. Catalyzes the last two sequential reactions in the de novo biosynthetic pathway for UDP-N-acetylglucosamine (UDP-GlcNAc). The C-terminal domain catalyzes the transfer of acetyl group from acetyl coenzyme A to glucosamine-1-phosphate (GlcN-1-P) to produce N-acetylglucosamine-1-phosphate (GlcNAc-1-P), which is converted into UDP-GlcNAc by the transfer of uridine 5-monophosphate (from uridine 5-triphosphate), a reaction catalyzed by the N-terminal domain. The sequence is that of Bifunctional protein GlmU from Cupriavidus metallidurans (strain ATCC 43123 / DSM 2839 / NBRC 102507 / CH34) (Ralstonia metallidurans).